We begin with the raw amino-acid sequence, 354 residues long: Guanine nucleotide-binding protein G(o) subunit alpha (354 aa).

Glycine 2 is lipidated: N-myristoyl glycine. The S-palmitoyl cysteine moiety is linked to residue cysteine 3. A G-alpha domain is found at lysine 32–tyrosine 354. Positions lysine 35–threonine 48 are G1 motif. GTP is bound by residues glycine 40 to serine 47, leucine 176 to threonine 182, aspartate 201 to glutamine 205, asparagine 270 to aspartate 273, and alanine 326. Residues serine 47 and threonine 182 each coordinate Mg(2+). The tract at residues aspartate 174 to threonine 182 is G2 motif. A G3 motif region spans residues phenylalanine 197–arginine 206. The segment at isoleucine 266 to aspartate 273 is G4 motif. Residues threonine 324–threonine 329 form a G5 motif region.

Belongs to the G-alpha family. G(i/o/t/z) subfamily. In terms of assembly, g proteins are composed of 3 units; alpha, beta and gamma. The alpha chain contains the guanine nucleotide binding site.

Functionally, guanine nucleotide-binding proteins (G proteins) are involved as modulators or transducers in various transmembrane signaling systems. The G(o) protein function is not clear. The chain is Guanine nucleotide-binding protein G(o) subunit alpha from Planorbella trivolvis (Marsh rams-horn).